Reading from the N-terminus, the 427-residue chain is MTYQHIYNIIKKKAYFDAHQAVLIAVSGGVDSMNLLHFLHAFQAELQIRIGIAHVNHKQRPESDDEEAYLRSWAKKHAIPIYVAYFQGAFSENAARHFRYQFFEEIMQQEHYSALVTAHHADDQAETILMRLIRGSRLRHLAGIREVQPFATGQLIRPFLTVSKEELPNPFHFEDHSNDSMAYFRNRVRHHYLPDFKRENPQATQSLIALSAESRLLLQAFDDLTKGLAFHRLDCFLAQSAAVQFFLLQHYLETFPQLAIKKSQFDDLLHIIRRQKQGIYPIKNTYCLLIEKESFVIKKIIPKTDLNRESKMVSYGDPLDYGGYRFAFSGDLTDKGHDIVIPLYSLSPVTLRHRQAGDRLFLGEFSKKLRRLFIDGKFTNEQRQNAIVGEQAGVIIFVLVGDETYLRKASKHDIMLAKLYIDKLEKR.

ATP is bound at residue 27 to 32; that stretch reads SGGVDS.

It belongs to the tRNA(Ile)-lysidine synthase family.

The protein resides in the cytoplasm. The catalysed reaction is cytidine(34) in tRNA(Ile2) + L-lysine + ATP = lysidine(34) in tRNA(Ile2) + AMP + diphosphate + H(+). In terms of biological role, ligates lysine onto the cytidine present at position 34 of the AUA codon-specific tRNA(Ile) that contains the anticodon CAU, in an ATP-dependent manner. Cytidine is converted to lysidine, thus changing the amino acid specificity of the tRNA from methionine to isoleucine. The polypeptide is tRNA(Ile)-lysidine synthase (Streptococcus equi subsp. zooepidemicus (strain H70)).